We begin with the raw amino-acid sequence, 177 residues long: Large ribosomal subunit protein uL6 (177 aa).

This sequence belongs to the universal ribosomal protein uL6 family. As to quaternary structure, part of the 50S ribosomal subunit.

Functionally, this protein binds to the 23S rRNA, and is important in its secondary structure. It is located near the subunit interface in the base of the L7/L12 stalk, and near the tRNA binding site of the peptidyltransferase center. This is Large ribosomal subunit protein uL6 from Methylorubrum populi (strain ATCC BAA-705 / NCIMB 13946 / BJ001) (Methylobacterium populi).